The chain runs to 1558 residues: Hybrid PKS-NRPS synthetase TAS1 (1558 aa).

The segment at 27–392 (YPMTKAQESL…RGLETPRAQV (366 aa)) is condensation (C) domain. The segment at 522–919 (TYKELNERSN…TITDVMPEVT (398 aa)) is adenylation (A) domain. The disordered stretch occupies residues 995 to 1028 (TSGSSSSATPSLVSSGSTTCRSPSTSSCSDSRSA). Residues 1027–1104 (SASPAITSAV…GQVDLLCGSE (78 aa)) enclose the Carrier domain. O-(pantetheine 4'-phosphoryl)serine is present on Ser-1063. Residues 1116-1144 (LGRGRTKSPAKIVDSQGRSSPSTIPSGGR) are disordered. Residues 1131-1140 (QGRSSPSTIP) show a composition bias toward polar residues. A Ketosynthase family 3 (KS3) domain is found at 1145-1558 (KSEIAIVGIS…GVNAHCVLRS (414 aa)). Residues Cys-1308, His-1444, and Asn-1484 each act as for beta-ketoacyl synthase activity in the active site.

It in the N-terminal section; belongs to the NRP synthetase family. The cofactor is pantetheine 4'-phosphate.

It catalyses the reaction acetoacetyl-CoA + L-isoleucine + ATP = tenuazonic acid + AMP + diphosphate + CoA + 2 H(+). Hybrid PKS-NRPS synthetase that mediates the biosynthesis of the toxin tenuazonic acid (TeA), an inhibitor of protein biosynthesis on ribosomes by suppressing the release of new protein. TAS1 alone is sufficient for TeA synthesis via the condensation of isoleucine (Ile) with acetoacetyl-CoA by the N-terminal NRPS module and subsequent cyclization conducted by the C-terminal KS domain. The chain is Hybrid PKS-NRPS synthetase TAS1 from Gloeophyllum trabeum (strain ATCC 11539 / FP-39264 / Madison 617) (Brown rot fungus).